A 150-amino-acid chain; its full sequence is Mediator of RNA polymerase II transcription subunit 22a (150 aa).

Residues Ser99–Asp127 are a coiled coil.

Belongs to the Mediator complex subunit 22 family. As to quaternary structure, component of the Mediator complex.

It is found in the nucleus. Its function is as follows. Component of the Mediator complex, a coactivator involved in the regulated transcription of nearly all RNA polymerase II-dependent genes. Mediator functions as a bridge to convey information from gene-specific regulatory proteins to the basal RNA polymerase II transcription machinery. The Mediator complex, having a compact conformation in its free form, is recruited to promoters by direct interactions with regulatory proteins and serves for the assembly of a functional preinitiation complex with RNA polymerase II and the general transcription factors. The polypeptide is Mediator of RNA polymerase II transcription subunit 22a (MED22A) (Arabidopsis thaliana (Mouse-ear cress)).